The following is a 223-amino-acid chain: Ribonuclease T (223 aa).

Residues 1 to 11 (MSDDHFDDEQE) show a composition bias toward acidic residues. Positions 1–21 (MSDDHFDDEQEGSSGGPRHPM) are disordered. Residues 31–205 (VVVDVETGGF…YDTEKTAELF (175 aa)) form the Exonuclease domain. Mg(2+)-binding residues include D34, E36, H192, and D197. H192 (proton donor/acceptor) is an active-site residue.

The protein belongs to the RNase T family. In terms of assembly, homodimer. It depends on Mg(2+) as a cofactor.

Its function is as follows. Trims short 3' overhangs of a variety of RNA species, leaving a one or two nucleotide 3' overhang. Responsible for the end-turnover of tRNA: specifically removes the terminal AMP residue from uncharged tRNA (tRNA-C-C-A). Also appears to be involved in tRNA biosynthesis. The protein is Ribonuclease T of Pseudomonas fluorescens (strain ATCC BAA-477 / NRRL B-23932 / Pf-5).